We begin with the raw amino-acid sequence, 156 residues long: UPF0262 protein Jann_2882 (156 aa).

It belongs to the UPF0262 family.

The chain is UPF0262 protein Jann_2882 from Jannaschia sp. (strain CCS1).